Here is a 166-residue protein sequence, read N- to C-terminus: Lymphocyte antigen 6G6e (166 aa).

The signal sequence occupies residues 1–18 (MGPSSAFLGVLFLSGTLG). Positions 28–151 (LRCYTCSFAK…PPPNLPLMTL (124 aa)) constitute a UPAR/Ly6 domain. 4 disulfide bridges follow: C30-C52, C33-C39, C110-C129, and C130-C135.

In terms of assembly, interacts with CHRNA4. O-glycosylated. Contains sialic acid residues.

It localises to the cell surface. The protein localises to the cell membrane. The protein resides in the cell projection. In terms of biological role, believed to act as a modulator of nicotinic acetylcholine receptors (nAChRs) activity. In vitro potentiates alpha-3:beta-4-containing nAChRs maximum response by increasing peak current and slowing down receptor desensitization; the activity is dependent on its cell surface localization. This is Lymphocyte antigen 6G6e (Ly6g6e) from Mus musculus (Mouse).